A 196-amino-acid polypeptide reads, in one-letter code: MSRYRGPRFKKIRRLGALPGLTRKTPKSGSNLKKKFHSGKKEQYRIRLQEKQKLRFHYGLTERQLLRYVHIAGKAKRSTGQVLLQLLEMRLDNILFRLGMASTIPEARQLVNHRHILVNRRIVDIPSFRCKPRDIITTKDNQRSKCLVQNSIASSDPGKLPKHLTIDTLQYKGLVKKILDRKWVGLKINELLVVEY.

The disordered stretch occupies residues 20–39 (GLTRKTPKSGSNLKKKFHSG). Positions 89–152 (MRLDNILFRL…RSKCLVQNSI (64 aa)) constitute an S4 RNA-binding domain.

It belongs to the universal ribosomal protein uS4 family. As to quaternary structure, part of the 30S ribosomal subunit. Contacts protein S5. The interaction surface between S4 and S5 is involved in control of translational fidelity.

The protein localises to the plastid. It localises to the chloroplast. One of the primary rRNA binding proteins, it binds directly to 16S rRNA where it nucleates assembly of the body of the 30S subunit. Functionally, with S5 and S12 plays an important role in translational accuracy. The protein is Small ribosomal subunit protein uS4c (rps4) of Dendrocalamus giganteus (Giant bamboo).